Consider the following 84-residue polypeptide: Putative defensin-like protein 63 (84 aa).

Positions 1 to 21 (MDIRKTYVIIFFVGILTISFS) are cleaved as a signal peptide. Disulfide bonds link C40–C81, C44–C67, C53–C79, and C57–C80.

This sequence belongs to the DEFL family.

It localises to the secreted. The sequence is that of Putative defensin-like protein 63 from Arabidopsis thaliana (Mouse-ear cress).